The following is a 307-amino-acid chain: Protein FAM76A (307 aa).

Disordered regions lie at residues 142–195 and 287–307; these read QRKH…ESIT and KQAAALSKSKKSEKSGAITSP. Residues 161 to 182 show a composition bias toward polar residues; it reads SRLSGGSHYNSQKTLSTSSIQN. Residues 217–299 adopt a coiled-coil conformation; the sequence is IIAQLKEEVA…AALSKSKKSE (83 aa).

It belongs to the FAM76 family.

The sequence is that of Protein FAM76A (FAM76A) from Bos taurus (Bovine).